Consider the following 115-residue polypeptide: NADH-ubiquinone oxidoreductase chain 3 (115 aa).

3 helical membrane passes run 3 to 23 (LMLV…IAFW), 55 to 75 (FFLV…LLPL), and 87 to 107 (VLIM…YEWI).

This sequence belongs to the complex I subunit 3 family. As to quaternary structure, core subunit of respiratory chain NADH dehydrogenase (Complex I) which is composed of 45 different subunits. Interacts with TMEM186. Interacts with TMEM242.

The protein localises to the mitochondrion inner membrane. It catalyses the reaction a ubiquinone + NADH + 5 H(+)(in) = a ubiquinol + NAD(+) + 4 H(+)(out). Its function is as follows. Core subunit of the mitochondrial membrane respiratory chain NADH dehydrogenase (Complex I) which catalyzes electron transfer from NADH through the respiratory chain, using ubiquinone as an electron acceptor. Essential for the catalytic activity of complex I. The protein is NADH-ubiquinone oxidoreductase chain 3 of Oryctolagus cuniculus (Rabbit).